Here is a 133-residue protein sequence, read N- to C-terminus: ATP synthase epsilon chain (133 aa).

The protein belongs to the ATPase epsilon chain family. As to quaternary structure, F-type ATPases have 2 components, CF(1) - the catalytic core - and CF(0) - the membrane proton channel. CF(1) has five subunits: alpha(3), beta(3), gamma(1), delta(1), epsilon(1). CF(0) has three main subunits: a, b and c.

The protein resides in the cellular thylakoid membrane. Produces ATP from ADP in the presence of a proton gradient across the membrane. This is ATP synthase epsilon chain from Prochlorococcus marinus (strain MIT 9303).